Consider the following 1070-residue polypeptide: DNA-directed RNA polymerase subunit beta (1070 aa).

The protein belongs to the RNA polymerase beta chain family. In plastids the minimal PEP RNA polymerase catalytic core is composed of four subunits: alpha, beta, beta', and beta''. When a (nuclear-encoded) sigma factor is associated with the core the holoenzyme is formed, which can initiate transcription.

The protein resides in the plastid. It catalyses the reaction RNA(n) + a ribonucleoside 5'-triphosphate = RNA(n+1) + diphosphate. In terms of biological role, DNA-dependent RNA polymerase catalyzes the transcription of DNA into RNA using the four ribonucleoside triphosphates as substrates. The chain is DNA-directed RNA polymerase subunit beta (rpoB) from Cuscuta reflexa (Southern Asian dodder).